An 87-amino-acid chain; its full sequence is MQIVQGFPADAPLCALMWTCSFLLPGLQTETPYPCTSLCLSSSQSAHPPLPVRVFSAESGYGIPFCAEPCSHVTVCHLQAGPVCMPV.

This is Down syndrome critical region protein 10 (DSCR10) from Pan troglodytes (Chimpanzee).